The sequence spans 332 residues: Probable endo-beta-1,4-glucanase B (332 aa).

The first 18 residues, 1 to 18 (MKFQSTLLLAAAAGSALA), serve as a signal peptide directing secretion. N-linked (GlcNAc...) asparagine glycosylation is found at asparagine 38 and asparagine 100. The active-site Proton donor is the glutamate 160. Asparagine 212 carries an N-linked (GlcNAc...) asparagine glycan. Glutamate 267 acts as the Nucleophile in catalysis. Asparagine 289 is a glycosylation site (N-linked (GlcNAc...) asparagine).

The protein belongs to the glycosyl hydrolase 5 (cellulase A) family.

It localises to the secreted. It carries out the reaction Endohydrolysis of (1-&gt;4)-beta-D-glucosidic linkages in cellulose, lichenin and cereal beta-D-glucans.. In terms of biological role, has endoglucanase activity on substrates containing beta-1,4 glycosidic bonds, like in carboxymethylcellulose (CMC), hydroxyethylcellulose (HEC) and beta-glucan. Involved in the degradation of complex natural cellulosic substrates. This is Probable endo-beta-1,4-glucanase B (eglB) from Aspergillus kawachii (strain NBRC 4308) (White koji mold).